A 179-amino-acid polypeptide reads, in one-letter code: Large ribosomal subunit protein uL5c (179 aa).

Belongs to the universal ribosomal protein uL5 family. As to quaternary structure, part of the 50S ribosomal subunit; contacts the 5S rRNA.

It localises to the plastid. It is found in the organellar chromatophore. In terms of biological role, binds 5S rRNA, forms part of the central protuberance of the 50S subunit. The protein is Large ribosomal subunit protein uL5c (rpl5) of Paulinella chromatophora.